A 91-amino-acid chain; its full sequence is UPF0250 protein BP0104 (91 aa).

Belongs to the UPF0250 family.

This is UPF0250 protein BP0104 from Bordetella pertussis (strain Tohama I / ATCC BAA-589 / NCTC 13251).